The sequence spans 927 residues: Ribosome-releasing factor 2, mitochondrial (927 aa).

The transit peptide at 1-57 directs the protein to the mitochondrion; it reads MVTAPLLGWVAVRPIPRLSKLNTCKYVSSSLQSYKRSVGSCLGKQQSRDFSYSATLT. A tr-type G domain is found at 64-379; that stretch reads EKTRNIGIIA…AVNNLLPGPS (316 aa). GTP is bound by residues 73 to 80, 163 to 167, and 217 to 220; these read AHIDAGKT, DTPGH, and NKLD.

Belongs to the TRAFAC class translation factor GTPase superfamily. Classic translation factor GTPase family. EF-G/EF-2 subfamily.

The protein localises to the mitochondrion. Mitochondrial GTPase that mediates the disassembly of ribosomes from messenger RNA at the termination of mitochondrial protein biosynthesis. Not involved in the GTP-dependent ribosomal translocation step during translation elongation. The polypeptide is Ribosome-releasing factor 2, mitochondrial (mef2) (Talaromyces marneffei (strain ATCC 18224 / CBS 334.59 / QM 7333) (Penicillium marneffei)).